The sequence spans 148 residues: Glutamate mutase sigma subunit 2 (148 aa).

The B12-binding domain maps to 1 to 134; it reads MRTVILGVIG…EALKADLGHR (134 aa). Adenosylcob(III)alamin is bound by residues 11–15, histidine 14, 59–61, and 90–94; these read SDAHV, SSL, and NLAVG. The segment covering 129–141 has biased composition (basic and acidic residues); the sequence is ADLGHRSREEASS. Residues 129–148 are disordered; the sequence is ADLGHRSREEASSEKVQLGS.

This sequence belongs to the methylaspartate mutase GlmS subunit family. As to quaternary structure, heterotetramer composed of 2 epsilon subunits (GlmE) and 2 sigma subunits (GlmS). GlmE exists as a homodimer and GlmS as a monomer. Adenosylcob(III)alamin serves as cofactor.

The enzyme catalyses (2S,3S)-3-methyl-L-aspartate = L-glutamate. It participates in amino-acid degradation; L-glutamate degradation via mesaconate pathway; acetate and pyruvate from L-glutamate: step 1/4. Catalyzes the carbon skeleton rearrangement of L-glutamate to L-threo-3-methylaspartate ((2S,3S)-3-methylaspartate). The sequence is that of Glutamate mutase sigma subunit 2 from Haloarcula marismortui (strain ATCC 43049 / DSM 3752 / JCM 8966 / VKM B-1809) (Halobacterium marismortui).